An 89-amino-acid polypeptide reads, in one-letter code: Small ribosomal subunit protein uS15 (89 aa).

The segment covering 1 to 21 (MSLHQERKSELVSKFRTHESD) has biased composition (basic and acidic residues). Positions 1–25 (MSLHQERKSELVSKFRTHESDTGSP) are disordered.

The protein belongs to the universal ribosomal protein uS15 family. Part of the 30S ribosomal subunit. Forms a bridge to the 50S subunit in the 70S ribosome, contacting the 23S rRNA.

Functionally, one of the primary rRNA binding proteins, it binds directly to 16S rRNA where it helps nucleate assembly of the platform of the 30S subunit by binding and bridging several RNA helices of the 16S rRNA. Its function is as follows. Forms an intersubunit bridge (bridge B4) with the 23S rRNA of the 50S subunit in the ribosome. This Myxococcus xanthus (strain DK1622) protein is Small ribosomal subunit protein uS15.